We begin with the raw amino-acid sequence, 200 residues long: V-set and transmembrane domain-containing protein 5 (200 aa).

Positions 1–28 (MRPLPSGRRKTRGISLGLFALCLAAARC) are cleaved as a signal peptide. Residues 29–147 (LQSQGVSLYI…VSEILYEDLH (119 aa)) are Extracellular-facing. In terms of domain architecture, Ig-like C2-type spans 37–139 (YIPQATINAT…QFGTIVLHVS (103 aa)). The N-linked (GlcNAc...) asparagine glycan is linked to Asn-102. Residues 148–168 (FVAVILAFLAAVAAVLISLMW) form a helical membrane-spanning segment. At 169–200 (VCNKCAYKFQRKRRHKLKESTTEEIELEDVEC) the chain is on the cytoplasmic side. The segment at 170–186 (CNKCAYKFQRKRRHKLK) is important for CDC42-dependent filopodia induction.

As to quaternary structure, can homooligomerize through cis interactions within the same cell membrane. In terms of processing, N-glycosylated.

It is found in the cell membrane. The protein resides in the cell projection. It localises to the dendrite. Its subcellular location is the axon. Its function is as follows. Cell adhesion-like membrane protein of the central nervous system (CNS) which modulates both the position and complexity of central neurons by altering their membrane morphology and dynamics. Involved in the formation of neuronal dendrites and protrusions including dendritic filopodia. In synaptogenesis, regulates synapse formation by altering dendritic spine morphology and actin distribution. Promotes formation of unstable neuronal spines such as thin and branched types. Regulates neuronal morphogenesis and migration during cortical development in the brain. The polypeptide is V-set and transmembrane domain-containing protein 5 (VSTM5) (Homo sapiens (Human)).